The sequence spans 532 residues: FRIGIDA-like protein 4b (532 aa).

It belongs to the Frigida family. Expressed in leaves, shoot apex, flowers and during seed development.

The sequence is that of FRIGIDA-like protein 4b (FRL4B) from Arabidopsis thaliana (Mouse-ear cress).